The primary structure comprises 253 residues: Trypsin beta (253 aa).

An N-terminal signal peptide occupies residues 1–22 (MLKFVILLSAVACALGGTIPEG). Positions 23–30 (LLPQLDGR) are cleaved as a propeptide — activation peptide. The region spanning 31 to 253 (IVGGTATTIS…DLRSWVINNA (223 aa)) is the Peptidase S1 domain. Cysteines 56 and 72 form a disulfide. Residues His-71 and Asp-116 each act as charge relay system in the active site. 2 disulfide bridges follow: Cys-180–Cys-197 and Cys-206–Cys-230. Ser-210 serves as the catalytic Charge relay system.

This sequence belongs to the peptidase S1 family.

It localises to the secreted. Its subcellular location is the extracellular space. It carries out the reaction Preferential cleavage: Arg-|-Xaa, Lys-|-Xaa.. In Drosophila erecta (Fruit fly), this protein is Trypsin beta (betaTry).